The following is a 1013-amino-acid chain: Sodium/potassium-transporting ATPase subunit alpha-3 (1013 aa).

Positions 1–24 are disordered; it reads MGDKKDDKDSPKKNKGKERRDLDD. Topologically, residues 1–77 are cytoplasmic; sequence MGDKKDDKDS…NALTPPPTTP (77 aa). Phosphoserine is present on residues Ser-37 and Ser-56. Residues 72–74 form an interaction with phosphoinositide-3 kinase region; the sequence is PPP. The chain crosses the membrane as a helical span at residues 78–98; that stretch reads EWVKFCRQLFGGFSILLWIGA. Over 99–121 the chain is Extracellular; that stretch reads ILCFLAYGIQAGTEDDPSGDNLY. Residues 122 to 142 traverse the membrane as a helical segment; sequence LGIVLAAVVIITGCFSYYQEA. The Cytoplasmic segment spans residues 143–278; the sequence is KSSKIMESFK…VGKTPIAIEI (136 aa). A phosphoserine mark is found at Ser-218 and Ser-265. A helical membrane pass occupies residues 279–298; the sequence is EHFIQLITGVAVFLGVSFFI. Topologically, residues 299 to 310 are extracellular; sequence LSLILGYTWLEA. A helical membrane pass occupies residues 311–328; that stretch reads VIFLIGIIVANVPEGLLA. At 329–762 the chain is on the cytoplasmic side; it reads TVTVCLTLTA…EEGRLIFDNL (434 aa). Asp-366 (4-aspartylphosphate intermediate) is an active-site residue. Ser-442 bears the Phosphoserine mark. Residue Tyr-548 is modified to Phosphotyrosine. Mg(2+)-binding residues include Asp-707 and Asp-711. The helical transmembrane segment at 763–782 threads the bilayer; that stretch reads KKSIAYTLTSNIPEITPFLL. Residues 783-792 lie on the Extracellular side of the membrane; it reads FIMANIPLPL. A helical membrane pass occupies residues 793 to 813; the sequence is GTITILCIDLGTDMVPAISLA. Over 814–833 the chain is Cytoplasmic; that stretch reads YEAAESDIMKRQPRNPRTDK. The chain crosses the membrane as a helical span at residues 834 to 856; sequence LVNERLISMAYGQIGMIQALGGF. The Extracellular portion of the chain corresponds to 857–908; sequence FSYFVILAENGFLPGNLVGIRLNWDDRTVNDLEDSYGQQWTYEQRKVVEFTC. A helical membrane pass occupies residues 909–928; it reads HTAFFVSIVVVQWADLIICK. The Cytoplasmic portion of the chain corresponds to 929 to 941; it reads TRRNSVFQQGMKN. Residue Ser-933 is modified to Phosphoserine; by PKA. The helical transmembrane segment at 942-960 threads the bilayer; sequence KILIFGLFEETALAAFLSY. Topologically, residues 961-975 are extracellular; it reads CPGMDVALRMYPLKP. Residues 976–996 traverse the membrane as a helical segment; it reads SWWFCAFPYSFLIFVYDEIRK. At 997–1013 the chain is on the cytoplasmic side; the sequence is LILRRNPGGWVEKETYY.

The protein belongs to the cation transport ATPase (P-type) (TC 3.A.3) family. Type IIC subfamily. As to quaternary structure, the sodium/potassium-transporting ATPase is composed of a catalytic alpha subunit, an auxiliary non-catalytic beta subunit and an additional regulatory subunit. Interacts with regulatory subunit FXYD1.

It is found in the cell membrane. The enzyme catalyses K(+)(out) + Na(+)(in) + ATP + H2O = K(+)(in) + Na(+)(out) + ADP + phosphate + H(+). This is the catalytic component of the active enzyme, which catalyzes the hydrolysis of ATP coupled with the exchange of sodium and potassium ions across the plasma membrane. This action creates the electrochemical gradient of sodium and potassium ions, providing the energy for active transport of various nutrients. The chain is Sodium/potassium-transporting ATPase subunit alpha-3 (ATP1A3) from Homo sapiens (Human).